Reading from the N-terminus, the 248-residue chain is Deoxyribose-phosphate aldolase (248 aa).

The active-site Proton donor/acceptor is aspartate 106. Lysine 168 acts as the Schiff-base intermediate with acetaldehyde in catalysis. Residue lysine 197 is the Proton donor/acceptor of the active site.

This sequence belongs to the DeoC/FbaB aldolase family. DeoC type 1 subfamily.

The protein resides in the cytoplasm. The catalysed reaction is 2-deoxy-D-ribose 5-phosphate = D-glyceraldehyde 3-phosphate + acetaldehyde. It participates in carbohydrate degradation; 2-deoxy-D-ribose 1-phosphate degradation; D-glyceraldehyde 3-phosphate and acetaldehyde from 2-deoxy-alpha-D-ribose 1-phosphate: step 2/2. Functionally, catalyzes a reversible aldol reaction between acetaldehyde and D-glyceraldehyde 3-phosphate to generate 2-deoxy-D-ribose 5-phosphate. This chain is Deoxyribose-phosphate aldolase, found in Sinorhizobium medicae (strain WSM419) (Ensifer medicae).